A 250-amino-acid polypeptide reads, in one-letter code: Tripartite motif-containing protein 73 (250 aa).

The RING-type zinc-finger motif lies at 16-57; the sequence is CPICLEVFKESLMLQCGHSYCKGCLVSLSYHLDTKVRCPMCW. A B box-type zinc finger spans residues 84 to 125; the sequence is PEPKVCVHHRNPLSLFCEKDQELICGLCGLLGSHQHHPVTPV. Positions 89, 92, 111, and 117 each coordinate Zn(2+). Coiled coils occupy residues 125–169 and 204–235; these read VSTV…NESD and LVAS…FGNE.

This sequence belongs to the TRIM/RBCC family.

This chain is Tripartite motif-containing protein 73 (TRIM73), found in Homo sapiens (Human).